A 126-amino-acid polypeptide reads, in one-letter code: MYPHLTSIGIEQPEAIERYSLRQEAANDILKVYFAKNKGELFAKSVKFKFPRQRKSVLVNSGSREYKEITEINRTLTHIIDELDIITKRKHTEVDIKKKILGDLRHLERVVSHKISEIEADLEKLK.

This sequence belongs to the UPF0325 family.

The polypeptide is UPF0325 protein PBPRA2971 (Photobacterium profundum (strain SS9)).